Consider the following 94-residue polypeptide: Large ribosomal subunit protein bL27 (94 aa).

A propeptide spanning residues 1 to 9 is cleaved from the precursor; the sequence is MLKLNLQFF. The interval 12 to 32 is disordered; it reads KKGVSSTKNGRDSESKRLGAK. Residues 20–32 are compositionally biased toward basic and acidic residues; it reads NGRDSESKRLGAK.

The protein belongs to the bacterial ribosomal protein bL27 family. The N-terminus is cleaved by ribosomal processing cysteine protease Prp.

This Staphylococcus carnosus (strain TM300) protein is Large ribosomal subunit protein bL27.